A 342-amino-acid polypeptide reads, in one-letter code: tRNA N6-adenosine threonylcarbamoyltransferase (342 aa).

Residues histidine 114 and histidine 118 each coordinate Fe cation. Residues 136–140 (LVSGG), aspartate 169, glycine 182, aspartate 186, and asparagine 275 each bind substrate. Fe cation is bound at residue aspartate 301.

Belongs to the KAE1 / TsaD family. It depends on Fe(2+) as a cofactor.

It localises to the cytoplasm. It catalyses the reaction L-threonylcarbamoyladenylate + adenosine(37) in tRNA = N(6)-L-threonylcarbamoyladenosine(37) in tRNA + AMP + H(+). Its function is as follows. Required for the formation of a threonylcarbamoyl group on adenosine at position 37 (t(6)A37) in tRNAs that read codons beginning with adenine. Is involved in the transfer of the threonylcarbamoyl moiety of threonylcarbamoyl-AMP (TC-AMP) to the N6 group of A37, together with TsaE and TsaB. TsaD likely plays a direct catalytic role in this reaction. The polypeptide is tRNA N6-adenosine threonylcarbamoyltransferase (Streptococcus pyogenes serotype M3 (strain ATCC BAA-595 / MGAS315)).